Reading from the N-terminus, the 458-residue chain is MSFDFIKDKNKHIHFIGIGGISMSGLAEILLYNNFSISGSDMNSSPITEKLKDKGAKIYIGHKKENVKDADLIVYTAAIASDNPEIIEAKEKNIKLMDRADFLGNLMKGYKYNIAISGTHGKTTTTSMLSHVALKANVDPTILVGGNLDIINGNVRVGESDFFITEACEYKSSFLKFFPYIGVILNIDADHLDYYKDLDDIKNAFSKFIKLIPKDGYLVAYGEDKNIQSIIKEANCNVITYGINSGDIQAHNIEYDEKACGNFDVFKDNQKLFSVKLNVPGKHNILNSLASICIGLASDMKDKDIIEGIESFFGTHRRFELKGCKNNITVIDDYAHHPTEISATLDAAKKYPHNKMFCVFQPHTYSRTLTLFDDFTKCFDNADEIILADIYAAREKDTGIINSNMLGDKLRERGLKCTNFHKFDDIKNYLIENAKDGDLILTIGAGDIYKVGEMYINL.

118 to 124 lines the ATP pocket; sequence GTHGKTT.

The protein belongs to the MurCDEF family.

It localises to the cytoplasm. The enzyme catalyses UDP-N-acetyl-alpha-D-muramate + L-alanine + ATP = UDP-N-acetyl-alpha-D-muramoyl-L-alanine + ADP + phosphate + H(+). The protein operates within cell wall biogenesis; peptidoglycan biosynthesis. Cell wall formation. This chain is UDP-N-acetylmuramate--L-alanine ligase, found in Clostridium botulinum (strain Loch Maree / Type A3).